A 314-amino-acid polypeptide reads, in one-letter code: Zinc-binding alcohol dehydrogenase domain-containing protein cipB (314 aa).

This sequence belongs to the zinc-containing alcohol dehydrogenase family.

Involved in osmoadaptation. This is Zinc-binding alcohol dehydrogenase domain-containing protein cipB (cipB) from Emericella nidulans (strain FGSC A4 / ATCC 38163 / CBS 112.46 / NRRL 194 / M139) (Aspergillus nidulans).